We begin with the raw amino-acid sequence, 359 residues long: DNA-directed RNA polymerase subunit alpha (359 aa).

The segment at 1–226 (MLISQRPSLA…ELFGLARELN (226 aa)) is alpha N-terminal domain (alpha-NTD). The tract at residues 241–359 (ADTIAAYAMP…GQDYAETEQL (119 aa)) is alpha C-terminal domain (alpha-CTD). Positions 315-359 (FDPSAAAAEYPSEGWASETETVGGLGRVEDNGYDDGQDYAETEQL) are disordered. Acidic residues predominate over residues 345–359 (NGYDDGQDYAETEQL).

Belongs to the RNA polymerase alpha chain family. In terms of assembly, homodimer. The RNAP catalytic core consists of 2 alpha, 1 beta, 1 beta' and 1 omega subunit. When a sigma factor is associated with the core the holoenzyme is formed, which can initiate transcription.

The catalysed reaction is RNA(n) + a ribonucleoside 5'-triphosphate = RNA(n+1) + diphosphate. Its function is as follows. DNA-dependent RNA polymerase catalyzes the transcription of DNA into RNA using the four ribonucleoside triphosphates as substrates. The protein is DNA-directed RNA polymerase subunit alpha of Saccharopolyspora erythraea (strain ATCC 11635 / DSM 40517 / JCM 4748 / NBRC 13426 / NCIMB 8594 / NRRL 2338).